The following is a 1395-amino-acid chain: DNA-directed RNA polymerase subunit beta' (1395 aa).

Zn(2+)-binding residues include cysteine 70, cysteine 72, cysteine 85, and cysteine 88. Mg(2+)-binding residues include aspartate 460, aspartate 462, and aspartate 464. Zn(2+)-binding residues include cysteine 814, cysteine 888, cysteine 895, and cysteine 898.

The protein belongs to the RNA polymerase beta' chain family. In terms of assembly, the RNAP catalytic core consists of 2 alpha, 1 beta, 1 beta' and 1 omega subunit. When a sigma factor is associated with the core the holoenzyme is formed, which can initiate transcription. Mg(2+) is required as a cofactor. Zn(2+) serves as cofactor.

The enzyme catalyses RNA(n) + a ribonucleoside 5'-triphosphate = RNA(n+1) + diphosphate. Functionally, DNA-dependent RNA polymerase catalyzes the transcription of DNA into RNA using the four ribonucleoside triphosphates as substrates. In Pseudoalteromonas atlantica (strain T6c / ATCC BAA-1087), this protein is DNA-directed RNA polymerase subunit beta'.